Here is a 78-residue protein sequence, read N- to C-terminus: Putative defensin-like protein 202 (78 aa).

The first 29 residues, methionine 1 to glycine 29, serve as a signal peptide directing secretion. 3 disulfide bridges follow: cysteine 44/cysteine 65, cysteine 49/cysteine 74, and cysteine 53/cysteine 76.

This sequence belongs to the DEFL family.

The protein localises to the secreted. In Arabidopsis thaliana (Mouse-ear cress), this protein is Putative defensin-like protein 202.